The following is a 55-amino-acid chain: Large ribosomal subunit protein bL33 (55 aa).

This sequence belongs to the bacterial ribosomal protein bL33 family.

This is Large ribosomal subunit protein bL33 from Deinococcus deserti (strain DSM 17065 / CIP 109153 / LMG 22923 / VCD115).